We begin with the raw amino-acid sequence, 181 residues long: Bifunctional protein PyrR (181 aa).

The PRPP-binding motif lies at Val-101–Thr-113.

The protein belongs to the purine/pyrimidine phosphoribosyltransferase family. PyrR subfamily. In terms of assembly, homodimer and homohexamer; in equilibrium.

The catalysed reaction is UMP + diphosphate = 5-phospho-alpha-D-ribose 1-diphosphate + uracil. Functionally, regulates transcriptional attenuation of the pyrimidine nucleotide (pyr) operon by binding in a uridine-dependent manner to specific sites on pyr mRNA. This disrupts an antiterminator hairpin in the RNA and favors formation of a downstream transcription terminator, leading to a reduced expression of downstream genes. Its function is as follows. Also displays a weak uracil phosphoribosyltransferase activity which is not physiologically significant. This is Bifunctional protein PyrR from Bacillus velezensis (strain DSM 23117 / BGSC 10A6 / LMG 26770 / FZB42) (Bacillus amyloliquefaciens subsp. plantarum).